Here is a 1848-residue protein sequence, read N- to C-terminus: Histone-lysine N-methyltransferase, H3 lysine-79 specific (1848 aa).

Positions 19–336 (DVISFAWPLQ…ILERYFQRLK (318 aa)) constitute a DOT1 domain. S-adenosyl-L-methionine contacts are provided by residues 142 to 145 (YGET), 165 to 174 (FIDLGSGVGQ), glutamate 192, and 228 to 229 (DF). Disordered stretches follow at residues 338–537 (KGGN…TRKA), 558–593 (AVSV…ARGR), 886–908 (LNSV…WPEV), 960–996 (PPPA…QMTL), 1033–1075 (LNED…AQSL), 1165–1190 (HMAS…RSSV), 1221–1333 (QRQQ…TQVS), 1345–1374 (QEKL…KTIG), 1432–1463 (VHVR…GGAA), 1486–1508 (ARAN…GRDY), 1529–1559 (EQQQ…PPLE), 1573–1604 (KYKE…LPTH), 1637–1713 (SPLA…VDPP), and 1731–1757 (QLSH…LQLT). A compositionally biased stretch (basic and acidic residues) spans 339 to 360 (GGNDHESVGTVRTTRDRAKREA). Positions 364–373 (QHHHNNHHSN) are enriched in basic residues. Residues 391 to 405 (ATATAAHQQRHQSQS) are compositionally biased toward low complexity. The segment covering 419–428 (SGQQAASKTR) has biased composition (polar residues). 2 stretches are compositionally biased toward low complexity: residues 429–439 (QQLQHQHNQQQ) and 453–474 (DATN…ASNG). A phosphoserine mark is found at serine 491, serine 492, and serine 494. The span at 507 to 518 (GSNGGSIGGGSV) shows a compositional bias: gly residues. Basic residues-rich tracts occupy residues 526–535 (TQKKRKKLTR) and 582–593 (RKGRMKKGARGR). Residues 1221-1235 (QRQQMRVEEQQQQQQ) show a composition bias toward low complexity. The segment covering 1236-1263 (HQHHHHHHHHHPQHRLPQHVQHQHPHQH) has biased composition (basic residues). Low complexity predominate over residues 1289 to 1300 (EPPQTQPLELLP). Phosphoserine occurs at positions 1318, 1324, and 1325. Residues 1532–1545 (QKQSKGAGSAGSSS) are compositionally biased toward low complexity. The segment covering 1574 to 1583 (YKEETEERQR) has biased composition (basic and acidic residues). 2 stretches are compositionally biased toward low complexity: residues 1585–1598 (AAAA…PPAG) and 1681–1696 (HDAT…SSSS). Over residues 1697–1706 (CGRRSNSNNG) the composition is skewed to polar residues.

It belongs to the class I-like SAM-binding methyltransferase superfamily. DOT1 family. In terms of tissue distribution, broadly expressed in most tissues. Expressed in a large subset of neurons and in a small subset of glial cells.

The protein resides in the nucleus. The enzyme catalyses L-lysyl(79)-[histone H3] + 3 S-adenosyl-L-methionine = N(6),N(6),N(6)-trimethyl-L-lysyl(79)-[histone H3] + 3 S-adenosyl-L-homocysteine + 3 H(+). Histone methyltransferase. Methylates 'Lys-79' of histone H3. Required for Polycomb Group (PcG) and trithorax Group (trxG) maintenance of expression. Also involved in telomeric silencing but do not in centric heterochromatin. Probably participates in pairing sensitivity. The polypeptide is Histone-lysine N-methyltransferase, H3 lysine-79 specific (gpp) (Drosophila melanogaster (Fruit fly)).